The sequence spans 699 residues: MEPFCPLLLASFSLSLATAGQGNDTTPTESNWTSTTAGPPDPGTSQPLLTWLLLPLLLLLFLLAAYFFRFRKQRKAVVNSNDKKMPNGILEEQEQQRVMLLSRSPSGPKKYFPIPVEHLEEEIRVRSADDCKRFREEFNSLPSGHIQGTFELANKEENREKNRYPNILPNDHCRVILSQLDGIPCSDYINASYIDGYKEKNKFIAAQGPKQETVNDFWRMVWEQRSATIVMLTNLKERKEEKCYQYWPDQGCWTYGNIRVCVEDCVVLVDYTIRKFCIHPQLPDSCKAPRLVSQLHFTSWPDFGVPFTPIGMLKFLKKVKTLNPSHAGPIVVHCSAGVGRTGTFIVIDAMMDMIHSEQKVDVFEFVSRIRNQRPQMVQTDVQYTFIYQALLEYYLYGDTELDVSSLERHLQTLHGTATHFDKIGLEEEFRKLTNVRIMKENMRTGNLPANMKKARVIQIIPYDFNRVILSMKRGQEFTDYINASFIDGYRQKDYFMATQGPLAHTVEDFWRMVWEWKSHTIVMLTEVQEREQDKCYQYWPTEGSVTHGDITIEIKSDTLSEAISIRDFLVTFKQPLARQEEQVRMVRQFHFHGWPEVGIPTEGKGMIDLIAAVQKQQQQTGNHPITVHCSAGAGRTGTFIALSNILERVKAEGLLDVFQAVKSLRLQRPHMVQTLEQYEFCYKVVQDFIDIFSDYANFK.

The first 22 residues, 1-22, serve as a signal peptide directing secretion; that stretch reads MEPFCPLLLASFSLSLATAGQG. The segment covering 20–36 has biased composition (low complexity); it reads GQGNDTTPTESNWTSTT. The segment at 20 to 41 is disordered; that stretch reads GQGNDTTPTESNWTSTTAGPPD. N-linked (GlcNAc...) asparagine glycans are attached at residues Asn-23 and Asn-31. Residues 23–47 are Extracellular-facing; it reads NDTTPTESNWTSTTAGPPDPGTSQP. A helical transmembrane segment spans residues 48–68; that stretch reads LLTWLLLPLLLLLFLLAAYFF. Over 69–699 the chain is Cytoplasmic; sequence RFRKQRKAVV…DIFSDYANFK (631 aa). 2 consecutive Tyrosine-protein phosphatase domains span residues 134–393 and 425–688; these read FREE…LLEY and LEEE…VQDF. Residues Asp-302, 334–340, and Gln-378 each bind substrate; that span reads CSAGVGR. The active-site Phosphocysteine intermediate is the Cys-334. Cys-629 (phosphocysteine intermediate) is an active-site residue. Phosphotyrosine is present on Tyr-695.

The protein belongs to the protein-tyrosine phosphatase family. Receptor class 4 subfamily. As to quaternary structure, monomer. Isoform 2: Homodimer. Can form oligomers. Dimerization is increased by oxidative stress and decreased by EGFR. Isoform 2 interacts with GRB2. In terms of processing, a catalytically active cytoplasmic form (p65) is produced by proteolytic cleavage of either isoform 1, isoform 2 or isoform 3. Post-translationally, isoform 1 and isoform 2 are phosphorylated on tyrosine residues by tyrosine kinase Neu. N-glycosylated. In terms of tissue distribution, isoform 1 is highly expressed in the brain, lung, spleen and testis. Isoform 2 is highly expressed in thymus, spleen and lung. Isoform 1 and isoform 2 are expressed in primary hepatocytes.

The protein resides in the cell membrane. The protein localises to the cytoplasm. It catalyses the reaction O-phospho-L-tyrosyl-[protein] + H2O = L-tyrosyl-[protein] + phosphate. Isoform 1 plays a critical role in signaling transduction pathways and phosphoprotein network topology in red blood cells. May play a role in osteoclast formation and function. Acts as a negative regulator of insulin receptor (IR) signaling and is involved in insulin-induced glucose metabolism mainly through direct dephosphorylation and inactivation of IR in hepatocytes and liver. Its function is as follows. Isoform 2 acts as a negative regulator of insulin receptor (IR) signaling in skeletal muscle. Regulates insulin-induced tyrosine phosphorylation of insulin receptor (IR) and insulin receptor substrate 1 (IRS-1), phosphorylation of protein kinase B and glycogen synthase kinase-3 and insulin induced stimulation of glucose uptake. In terms of biological role, isoform 1 and isoform 2 act as a negative regulator of FceRI-mediated signal transduction leading to cytokine production and degranulation, most likely by acting at the level of SYK to affect downstream events such as phosphorylation of SLP76 and LAT and mobilization of Ca(2+). In Rattus norvegicus (Rat), this protein is Receptor-type tyrosine-protein phosphatase epsilon (Ptpre).